The sequence spans 412 residues: Cellobiose 2-epimerase (412 aa).

This sequence belongs to the cellobiose 2-epimerase family.

The catalysed reaction is D-cellobiose = beta-D-glucosyl-(1-&gt;4)-D-mannopyranose. Functionally, catalyzes the reversible epimerization of cellobiose to 4-O-beta-D-glucopyranosyl-D-mannose (Glc-Man). Can also use lactose, epilactose, mannobiose and cellotriose. Highly specific for oligosaccharides linked by the beta-1,4-glycosidic linkage. Shows preference for lactose. The polypeptide is Cellobiose 2-epimerase (ce) (Rhodothermus marinus (Rhodothermus obamensis)).